A 502-amino-acid polypeptide reads, in one-letter code: MAIKAEEISALLRSQIENYESEMSVTDVGTVLQIGDGIALIHGLNDVMAGELVEFHNGVLGLAQNLEESNVGVVILGPYAGITEGDEVKRTGRIMEVPVGEELIGRVVNPLGQPIDGQGPINTTKTRPVEKKATGVMDRKSVDEPLQTGIKAIDALVPIGRGQRELIIGDRQTGKTTIAIDTILNQKDQGTICIYVAIGQKDSTVRANVEKLRQAGALDYTIVVAASASEPSPLLYIAPYSGVTMGEEFMFNGKHVLIVYDDLTKQAAAYRELSLLLRRPPGREAYPGDVFYLHSRLLERAAKLNDDLGGGSITALPIIETQAGDISAYVPTNVISITDGQIFLQSDLFFSGVRPAINAGQSVSRVGGSAQIKAMKKVAGTLRLDLASYRELESFAQFGSDLDEFTASKLERGKRTVEVLKQDQNKPLPVEHQVLIIYALTKGYLDDIPVVDITRFEDELNHWAESNATELLNEIRETGGLPDAEKFDTAINEFKKSFSKSE.

169–176 (GDRQTGKT) is an ATP binding site.

The protein belongs to the ATPase alpha/beta chains family. As to quaternary structure, F-type ATPases have 2 components, CF(1) - the catalytic core - and CF(0) - the membrane proton channel. CF(1) has five subunits: alpha(3), beta(3), gamma(1), delta(1), epsilon(1). CF(0) has three main subunits: a(1), b(2) and c(9-12). The alpha and beta chains form an alternating ring which encloses part of the gamma chain. CF(1) is attached to CF(0) by a central stalk formed by the gamma and epsilon chains, while a peripheral stalk is formed by the delta and b chains.

The protein resides in the cell membrane. It carries out the reaction ATP + H2O + 4 H(+)(in) = ADP + phosphate + 5 H(+)(out). Functionally, produces ATP from ADP in the presence of a proton gradient across the membrane. The alpha chain is a regulatory subunit. This Staphylococcus aureus (strain bovine RF122 / ET3-1) protein is ATP synthase subunit alpha.